Here is an 874-residue protein sequence, read N- to C-terminus: MGACFSVAISCDQAVNNLTSCLSRNQNRFRNLVDHVAALKKTVRQLEARRDDLLKRIKVQEDRGLNLLDEVQQWLSEVESRVCEAHDILSQSDEEIDNLCCGQYCSKRCKYSYDYSKSVINKLQDVENLLSKGVFDEVAQKGPIPKVEERLFHQEIVGQEAIVESTWNSMMEVGVGLLGIYGMGGVGKTTLLSQINNKFRTVSNDFDIAIWVVVSKNPTVKRIQEDIGKRLDLYNEGWEQKTENEIASTIKRSLENKKYMLLLDDMWTKVDLANIGIPVPKRNGSKIAFTSRSNEVCGKMGVDKEIEVTCLMWDDAWDLFTRNMKETLESHPKIPEVAKSIARKCNGLPLALNVIGETMARKKSIEEWHDAVGVFSGIEADILSILKFSYDDLKCEKTKSCFLFSALFPEDYEIGKDDLIEYWVGQGIILGSKGINYKGYTIIGTLTRAYLLKESETKEKVKMHDVVREMALWISSGCGDQKQKNVLVVEANAQLRDIPKIEDQKAVRRMSLIYNQIEEACESLHCPKLETLLLRDNRLRKISREFLSHVPILMVLDLSLNPNLIELPSFSPLYSLRFLNLSCTGITSLPDGLYALRNLLYLNLEHTYMLKRIYEIHDLPNLEVLKLYASGIDITDKLVRQIQAMKHLYLLTITLRNSSGLEIFLGDTRFSSYTEGLTLDEQSYYQSLKVPLATISSSRFLEIQDSHIPKIEIEGSSSNESEIVGPRVRRDISFINLRKVRLDNCTGLKDLTWLVFAPHLATLYVVCLPDIEHIISRSEESRLQKTCELAGVIPFRELEFLTLRNLGQLKSIYRDPLLFGKLKEINIKSCPKLTKLPLDSRSAWKQNVVINAEEEWLQGLQWEDVATKERFFPS.

The stretch at 22–74 (LSRNQNRFRNLVDHVAALKKTVRQLEARRDDLLKRIKVQEDRGLNLLDEVQQW) forms a coiled coil. Residues 139–434 (AQKGPIPKVE…GQGIILGSKG (296 aa)) form the NB-ARC domain. 182-189 (GMGGVGKT) lines the ATP pocket. LRR repeat units follow at residues 483–505 (QKNVLVVEANAQLRDIPKIEDQK), 506–527 (AVRRMSLIYNQIEEACESLHCP), 528–548 (KLETLLLRDNRLRKISREFLS), 552–574 (ILMVLDLSLNPNLIELPSFSPLY), 575–597 (SLRFLNLSCTGITSLPDGLYALR), 598–620 (NLLYLNLEHTYMLKRIYEIHDLP), and 621–642 (NLEVLKLYASGIDITDKLVRQI).

Belongs to the disease resistance NB-LRR family.

In terms of biological role, potential disease resistance protein. In Arabidopsis thaliana (Mouse-ear cress), this protein is Putative disease resistance protein At5g05400.